An 825-amino-acid chain; its full sequence is MPTPATIKSYQDIKANIEGACQRIAPLWPLKHFVAVNPYVGLRDQPFWRADQTLRKITGKGLTMPRPYYEEQIANGRIIQEDLDEALKQMHSNWSVTQLKQVMKQRSASRNVPFPVFADAMFADDRRDWPGFVVERISQYCAAYFDEGQATWSMPWRDDPMYQAWLKFMHFDKSPRMVGLRGIGEAAAALPAAAETAIALALKELSVPFDLIDDYLFAALLSIGGWAGWARYLRWQAELKGETDQSLRDLLAIRVCWDAILHKTCADIAVRKQWHLMLHTQQNRAIEKPSEHVDAILQTALEIGYQRSLIKSLKEASRPSNTVIERPVAQAAFCIDVRSEIIRRALETVAPGIQTLGFAGFFGVLMEYVPFGSNAPKGHLPVIFNPPYRVCEDLSHASEDETQRHAAKRQLRLRVATAWKSFKTSAVSTFTFVEATGLLYAPKLFGDSMGWTRTVPHPDERGLDSGTKQRLRPRLIASGNGKSSAKSTGIPETERAGVGEFILKNMGLTQTFARLILLAGHGSTTVNNPQGTGLDCGACAGQTGEASARIAVTLLNDPATRRGLEEKGLKIPKDTYFIAGLHDTTTDEVTIFDTEDLPTTHAKDLAQLRQWLADAGELTRLERATLLGTASQAPEVVTRDMRRRTRDWAEVRPEWALAGNAAFIAAPRQRTRGVDLEGRAFLHDYDWHKDAGFSTLELIMTAPMVVANWINMQYYGSMVDNLRFGSGNKVLHNVVGGSIGVLEGNGGDLRVGFALQSLHDGKRWIHEPVRLNVVIEAPQAEMESIISRHILVRELVDNGWLYLFQIDDDGSVYRRVCDKQWPRMT.

The Zn(2+) site is built by Cys-334, Asp-336, His-521, and Cys-536.

It belongs to the inorganic carbon transporter (TC 9.A.2) DabA family. In terms of assembly, forms a complex with DabB. It depends on Zn(2+) as a cofactor.

The protein localises to the cell inner membrane. Part of an energy-coupled inorganic carbon pump. The protein is Probable inorganic carbon transporter subunit DabA of Acidithiobacillus ferrooxidans (strain ATCC 23270 / DSM 14882 / CIP 104768 / NCIMB 8455) (Ferrobacillus ferrooxidans (strain ATCC 23270)).